We begin with the raw amino-acid sequence, 194 residues long: ATP-dependent Clp protease proteolytic subunit (194 aa).

Ser97 serves as the catalytic Nucleophile. His122 is a catalytic residue.

It belongs to the peptidase S14 family. Fourteen ClpP subunits assemble into 2 heptameric rings which stack back to back to give a disk-like structure with a central cavity, resembling the structure of eukaryotic proteasomes.

The protein localises to the cytoplasm. It carries out the reaction Hydrolysis of proteins to small peptides in the presence of ATP and magnesium. alpha-casein is the usual test substrate. In the absence of ATP, only oligopeptides shorter than five residues are hydrolyzed (such as succinyl-Leu-Tyr-|-NHMec, and Leu-Tyr-Leu-|-Tyr-Trp, in which cleavage of the -Tyr-|-Leu- and -Tyr-|-Trp bonds also occurs).. Its function is as follows. Cleaves peptides in various proteins in a process that requires ATP hydrolysis. Has a chymotrypsin-like activity. Plays a major role in the degradation of misfolded proteins. The polypeptide is ATP-dependent Clp protease proteolytic subunit (Carsonella ruddii (strain PV)).